The following is a 227-amino-acid chain: Lipoprotein-releasing system ATP-binding protein LolD (227 aa).

An ABC transporter domain is found at 7 to 227 (LSCRDLGKSY…HLQEGHLVAI (221 aa)). 43-50 (GTSGSGKS) contributes to the ATP binding site.

It belongs to the ABC transporter superfamily. Lipoprotein translocase (TC 3.A.1.125) family. As to quaternary structure, the complex is composed of two ATP-binding proteins (LolD) and two transmembrane proteins (LolC and LolE).

The protein resides in the cell inner membrane. Functionally, part of the ABC transporter complex LolCDE involved in the translocation of mature outer membrane-directed lipoproteins, from the inner membrane to the periplasmic chaperone, LolA. Responsible for the formation of the LolA-lipoprotein complex in an ATP-dependent manner. This is Lipoprotein-releasing system ATP-binding protein LolD from Pseudomonas fluorescens (strain ATCC BAA-477 / NRRL B-23932 / Pf-5).